Here is a 444-residue protein sequence, read N- to C-terminus: Probable glycine dehydrogenase (decarboxylating) subunit 1 (444 aa).

This sequence belongs to the GcvP family. N-terminal subunit subfamily. The glycine cleavage system is composed of four proteins: P, T, L and H. In this organism, the P 'protein' is a heterodimer of two subunits.

It catalyses the reaction N(6)-[(R)-lipoyl]-L-lysyl-[glycine-cleavage complex H protein] + glycine + H(+) = N(6)-[(R)-S(8)-aminomethyldihydrolipoyl]-L-lysyl-[glycine-cleavage complex H protein] + CO2. Functionally, the glycine cleavage system catalyzes the degradation of glycine. The P protein binds the alpha-amino group of glycine through its pyridoxal phosphate cofactor; CO(2) is released and the remaining methylamine moiety is then transferred to the lipoamide cofactor of the H protein. The protein is Probable glycine dehydrogenase (decarboxylating) subunit 1 of Chlorobium phaeobacteroides (strain DSM 266 / SMG 266 / 2430).